We begin with the raw amino-acid sequence, 235 residues long: Large ribosomal subunit protein uL1 (235 aa).

Belongs to the universal ribosomal protein uL1 family. Part of the 50S ribosomal subunit.

In terms of biological role, binds directly to 23S rRNA. The L1 stalk is quite mobile in the ribosome, and is involved in E site tRNA release. Its function is as follows. Protein L1 is also a translational repressor protein, it controls the translation of the L11 operon by binding to its mRNA. In Prochlorococcus marinus (strain MIT 9301), this protein is Large ribosomal subunit protein uL1.